The sequence spans 241 residues: L-aspartate dehydrogenase (241 aa).

NAD(+) is bound by residues Ala-109 and Asn-164. His-193 is an active-site residue.

It belongs to the L-aspartate dehydrogenase family.

The catalysed reaction is L-aspartate + NADP(+) + H2O = oxaloacetate + NH4(+) + NADPH + H(+). It catalyses the reaction L-aspartate + NAD(+) + H2O = oxaloacetate + NH4(+) + NADH + H(+). Its pathway is cofactor biosynthesis; NAD(+) biosynthesis; iminoaspartate from L-aspartate (dehydrogenase route): step 1/1. Specifically catalyzes the NAD or NADP-dependent dehydrogenation of L-aspartate to iminoaspartate. The polypeptide is L-aspartate dehydrogenase (Thermotoga sp. (strain RQ2)).